The primary structure comprises 694 residues: Elongation factor G (694 aa).

In terms of domain architecture, tr-type G spans 9–288 (SKIRNIGIMA…VIVKWLPSPK (280 aa)). GTP is bound by residues 18–25 (AHIDAGKT), 82–86 (DTPGH), and 136–139 (NKMD).

This sequence belongs to the TRAFAC class translation factor GTPase superfamily. Classic translation factor GTPase family. EF-G/EF-2 subfamily.

It is found in the cytoplasm. Functionally, catalyzes the GTP-dependent ribosomal translocation step during translation elongation. During this step, the ribosome changes from the pre-translocational (PRE) to the post-translocational (POST) state as the newly formed A-site-bound peptidyl-tRNA and P-site-bound deacylated tRNA move to the P and E sites, respectively. Catalyzes the coordinated movement of the two tRNA molecules, the mRNA and conformational changes in the ribosome. The sequence is that of Elongation factor G from Chlamydia abortus (strain DSM 27085 / S26/3) (Chlamydophila abortus).